The following is a 624-amino-acid chain: Alpha-amylase 1 (624 aa).

The signal sequence occupies residues 1-28; sequence MLLINFFIAVLGVISLSPIVVARYILRR. One can recognise a CBM21 domain in the interval 40–133; sequence ESVTGSNHVQ…SDTSVTYTTS (94 aa). A disulfide bridge connects residues Cys177 and Cys185. Residue Trp230 coordinates substrate. Asn268 lines the Ca(2+) pocket. Residue His269 participates in substrate binding. Cys297 and Cys311 are disulfide-bonded. Asn304 carries N-linked (GlcNAc...) asparagine glycosylation. Residues Glu309 and Asp322 each contribute to the Ca(2+) site. A glycan (N-linked (GlcNAc...) asparagine) is linked at Asn344. Substrate is bound at residue Arg351. Ca(2+) contacts are provided by Asp353, His357, and Glu377. Asp353 functions as the Nucleophile in the catalytic mechanism. 356–357 contacts substrate; the sequence is KH. Glu377 (proton donor) is an active-site residue. Gly381 provides a ligand contact to substrate. A disulfide bond links Cys387 and Cys430. 2 residues coordinate substrate: Asp444 and Arg491. The cysteines at positions 587 and 622 are disulfide-linked.

Belongs to the glycosyl hydrolase 13 family. Ca(2+) is required as a cofactor.

It is found in the secreted. It carries out the reaction Endohydrolysis of (1-&gt;4)-alpha-D-glucosidic linkages in polysaccharides containing three or more (1-&gt;4)-alpha-linked D-glucose units.. The polypeptide is Alpha-amylase 1 (LKA1) (Lipomyces kononenkoae (Yeast)).